The primary structure comprises 259 residues: Phosphatidate cytidylyltransferase (259 aa).

7 helical membrane passes run 31-51 (LVIF…CFAI), 69-89 (PLVL…IGLL), 103-123 (FFKS…LIKI), 129-149 (YYLL…YYIG), 170-190 (FLGG…YGIL), 193-213 (FLLG…KSFI), and 236-256 (FDAL…GELN).

It belongs to the CDS family.

It is found in the cell membrane. The enzyme catalyses a 1,2-diacyl-sn-glycero-3-phosphate + CTP + H(+) = a CDP-1,2-diacyl-sn-glycerol + diphosphate. It functions in the pathway phospholipid metabolism; CDP-diacylglycerol biosynthesis; CDP-diacylglycerol from sn-glycerol 3-phosphate: step 3/3. The chain is Phosphatidate cytidylyltransferase (cdsA) from Aquifex aeolicus (strain VF5).